The primary structure comprises 401 residues: Homocitrate synthase (401 aa).

The Pyruvate carboxyltransferase domain occupies 22–271 (VRFCDTTLRD…KLPIDLDTTS (250 aa)). A disordered region spans residues 367-401 (TRHKRGLDSRDLPGTSRAGRDAGPRAGTPTREEPV).

The protein belongs to the alpha-IPM synthase/homocitrate synthase family.

It catalyses the reaction acetyl-CoA + 2-oxoglutarate + H2O = (2R)-homocitrate + CoA + H(+). Its function is as follows. This protein is a Fe-Mo-cofactor biosynthetic component. The sequence is that of Homocitrate synthase (nifV) from Frankia sp. (strain FaC1).